The following is a 1299-amino-acid chain: DNA-directed RNA polymerase subunit beta' (1299 aa).

Residues cysteine 60, cysteine 62, cysteine 75, and cysteine 78 each contribute to the Zn(2+) site. Aspartate 535, aspartate 537, and aspartate 539 together coordinate Mg(2+). Zn(2+) is bound by residues cysteine 877, cysteine 954, cysteine 961, and cysteine 964.

This sequence belongs to the RNA polymerase beta' chain family. The RNAP catalytic core consists of 2 alpha, 1 beta, 1 beta' and 1 omega subunit. When a sigma factor is associated with the core the holoenzyme is formed, which can initiate transcription. Mg(2+) is required as a cofactor. It depends on Zn(2+) as a cofactor.

It carries out the reaction RNA(n) + a ribonucleoside 5'-triphosphate = RNA(n+1) + diphosphate. DNA-dependent RNA polymerase catalyzes the transcription of DNA into RNA using the four ribonucleoside triphosphates as substrates. The sequence is that of DNA-directed RNA polymerase subunit beta' from Paenarthrobacter aurescens (strain TC1).